Reading from the N-terminus, the 439-residue chain is Xylose isomerase (439 aa).

Active-site residues include histidine 101 and aspartate 104. Residues glutamate 232, glutamate 268, histidine 271, aspartate 296, aspartate 307, aspartate 309, and aspartate 339 each coordinate Mg(2+).

Belongs to the xylose isomerase family. As to quaternary structure, homotetramer. Mg(2+) serves as cofactor.

It localises to the cytoplasm. It catalyses the reaction alpha-D-xylose = alpha-D-xylulofuranose. The protein is Xylose isomerase of Histophilus somni (strain 2336) (Haemophilus somnus).